A 466-amino-acid chain; its full sequence is Vimentin (466 aa).

Residues 1–13 (MSTRSVSSSSYRR) show a composition bias toward low complexity. The disordered stretch occupies residues 1–31 (MSTRSVSSSSYRRMFGGPGTASRPSSTRSYV). Residue Ser2 is modified to N-acetylserine. Residues 2 to 95 (STRSVSSSSY…FSLADAINTE (94 aa)) form a head region. A Phosphoserine modification is found at Ser5. Residue Ser7 is modified to Phosphoserine; by PKA and PKC; alternate. Ser7 is a glycosylation site (O-linked (GlcNAc) serine; alternate). Ser8 is modified (phosphoserine). 2 positions are modified to phosphoserine; by PKC: Ser9 and Ser10. A Phosphothreonine modification is found at Thr20. Ser25 carries the post-translational modification Phosphoserine; by PKA and PKC. Position 26 is a phosphoserine; by PKC (Ser26). The O-linked (GlcNAc) threonine glycan is linked to Thr33. An O-linked (GlcNAc) serine; alternate glycan is attached at Ser34. Ser34 is subject to Phosphoserine; by PKC; alternate. The residue at position 39 (Ser39) is a Phosphoserine; by CaMK2, PKA, PKC and ROCK2. Phosphoserine; by PKC is present on Ser42. The residue at position 49 (Ser49) is a Phosphoserine. Residue Tyr53 is modified to Phosphotyrosine. Residue Ser55 is modified to Phosphoserine. Position 56 is a phosphoserine; by CDK5 and CDK1 (Ser56). At Tyr61 the chain carries Phosphotyrosine. Ser66 is modified (phosphoserine; by PKA and PKC). Residue Ser72 is modified to Phosphoserine; by AURKB and ROCK2. Ser83 is subject to Phosphoserine; by CaMK2. At Ser87 the chain carries Phosphoserine. The interval 96–131 (FKNTRTNEKVELQELNDRFANYIDKVRFLEQQNKIL) is coil 1A. Residues 96–131 (FKNTRTNEKVELQELNDRFANYIDKVRFLEQQNKIL) are a coiled coil. In terms of domain architecture, IF rod spans 103 to 411 (EKVELQELND…KLLEGEESRI (309 aa)). A Glycyl lysine isopeptide (Lys-Gly) (interchain with G-Cter in SUMO2) cross-link involves residue Lys104. Tyr117 is subject to Phosphotyrosine. 3 positions are modified to N6-acetyllysine; alternate: Lys120, Lys129, and Lys139. N6-succinyllysine; alternate occurs at positions 120 and 129. Glycyl lysine isopeptide (Lys-Gly) (interchain with G-Cter in SUMO2); alternate cross-links involve residues Lys120, Lys129, and Lys139. Positions 132 to 153 (LAELEQLKGQGKSRLGDLYEEE) are linker 1. At Ser144 the chain carries Phosphoserine. Positions 154-245 (MRELRRQVDQ…KLHDEEIQEL (92 aa)) form a coiled coil. The tract at residues 154-245 (MRELRRQVDQ…KLHDEEIQEL (92 aa)) is coil 1B. Lys168 is subject to N6-acetyllysine. N6-acetyllysine; alternate is present on Lys188. An N6-succinyllysine; alternate modification is found at Lys188. Ser214 bears the Phosphoserine mark. Lys223 carries the N6-acetyllysine; alternate modification. Lys223 participates in a covalent cross-link: Glycyl lysine isopeptide (Lys-Gly) (interchain with G-Cter in SUMO2); alternate. Ser226 carries the post-translational modification Phosphoserine. The residue at position 235 (Lys235) is an N6-acetyllysine. Residues 246 to 268 (QAQIQEQHVQIDMDVSKPDLTAA) form a linker 12 region. Lys262 is covalently cross-linked (Glycyl lysine isopeptide (Lys-Gly) (interchain with G-Cter in SUMO2)). The segment at 269–407 (LRDVRQQYES…ATYRKLLEGE (139 aa)) is coil 2. The residue at position 294 (Lys294) is an N6-acetyllysine; alternate. Position 294 is an N6-succinyllysine; alternate (Lys294). Lys294 is covalently cross-linked (Glycyl lysine isopeptide (Lys-Gly) (interchain with G-Cter in SUMO2); alternate). Ser299 is modified (phosphoserine). Positions 303-407 (NRNNDALRQA…ATYRKLLEGE (105 aa)) form a coiled coil. Lys313 is covalently cross-linked (Glycyl lysine isopeptide (Lys-Gly) (interchain with G-Cter in SUMO2)). Residues 326 to 329 (LTCE) carry the [IL]-x-C-x-x-[DE] motif motif. Lys373 is modified (N6-acetyllysine; alternate). A Glycyl lysine isopeptide (Lys-Gly) (interchain with G-Cter in SUMO2); alternate cross-link involves residue Lys373. A tail region spans residues 408–466 (ESRISLPLPNFSSLNLRETNLDSLPLVDTHSKRTLLIKTVETRDGQVINETSQHHDDLE). A phosphoserine mark is found at Ser409, Ser412, Ser419, and Ser420. Thr426 is subject to Phosphothreonine. The residue at position 430 (Ser430) is a Phosphoserine. Position 436 is a phosphothreonine (Thr436). A Phosphoserine modification is found at Ser438. Lys439 participates in a covalent cross-link: Glycyl lysine isopeptide (Lys-Gly) (interchain with G-Cter in SUMO2). Position 445 is an N6-acetyllysine; alternate (Lys445). Position 445 is an N6-succinyllysine; alternate (Lys445). Lys445 is covalently cross-linked (Glycyl lysine isopeptide (Lys-Gly) (interchain with G-Cter in SUMO2); alternate). Lys445 participates in a covalent cross-link: Glycyl lysine isopeptide (Lys-Gly) (interchain with G-Cter in SUMO1); alternate. A phosphothreonine mark is found at Thr446 and Thr458. Ser459 carries the phosphoserine modification.

Belongs to the intermediate filament family. Homomer assembled from elementary dimers. Identified in complexes that contain VIM, EZR, AHNAK, BFSP1, BFSP2, ANK2, PLEC, PRX and spectrin. Interacts with BCAS3. Interacts with LGSN. Interacts with SYNM. Interacts (via rod region) with PLEC (via CH 1 domain). Interacts with STK33. Interacts with LARP6. Interacts with RAB8B. Interacts with TOR1A; the interaction associates TOR1A with the cytoskeleton. Interacts with TOR1AIP1. Interacts with TOR1AIP1. Interacts with DIAPH1. Interacts with EPPK1; interaction is dependent of higher-order structure of intermediate filament. Interacts with the non-receptor tyrosine kinase SRMS; the interaction leads to phosphorylation of VIM. Interacts with NOD2. Interacts (via head region) with CORO1C. Interacts with HDGF. Interacts with PRKCE (via phorbol-ester/DAG-type 2 domain). Interacts with BFSP2. Interacts with PPL. Interacts with PKP1 and PKP2. Interacts with SCRIB (via PDZ domains); the interaction protects SCRIB from proteasomal degradation and facilitates SCRIB localization to intermediate filaments, the interaction is reduced by cell contact inhibition. In terms of processing, one of the most prominent phosphoproteins in various cells of mesenchymal origin. Phosphorylation is enhanced during cell division, at which time vimentin filaments are significantly reorganized. Phosphorylation by PKN1 inhibits the formation of filaments. Filament disassembly during mitosis is promoted by phosphorylation at Ser-55 as well as by nestin. Phosphorylated at Ser-56 by CDK5 during neutrophil secretion in the cytoplasm. Phosphorylated by STK33. Phosphorylated on tyrosine residues by SRMS. S-nitrosylation is induced by interferon-gamma and oxidatively-modified low-densitity lipoprotein (LDL(ox)) possibly implicating the iNOS-S100A8/9 transnitrosylase complex.

The protein resides in the cytoplasm. Its subcellular location is the cytoskeleton. It localises to the nucleus matrix. The protein localises to the cell membrane. Vimentins are class-III intermediate filaments found in various non-epithelial cells, especially mesenchymal cells. Vimentin is attached to the nucleus, endoplasmic reticulum, and mitochondria, either laterally or terminally. Plays a role in cell directional movement, orientation, cell sheet organization and Golgi complex polarization at the cell migration front. Protects SCRIB from proteasomal degradation and facilitates its localization to intermediate filaments in a cell contact-mediated manner. Functionally, involved with LARP6 in the stabilization of type I collagen mRNAs for CO1A1 and CO1A2. The sequence is that of Vimentin (VIM) from Bos taurus (Bovine).